Consider the following 466-residue polypeptide: Myocardial zonula adherens protein (466 aa).

Positions 1–10 (MLRSTSTVTL) are enriched in polar residues. Residues 1-16 (MLRSTSTVTLFSGGGA) form the signal peptide. The tract at residues 1–68 (MLRSTSTVTL…SNGESTKRLP (68 aa)) is disordered. Positions 45-55 (TEKKIERKDQP) are enriched in basic and acidic residues. 2 coiled-coil regions span residues 95–137 (NQLK…QDLS) and 187–415 (HIKD…LTET).

Belongs to the MYZAP family. Interacts with DSP, MPRIP and TJP1/ZO1. Interaction with MPRIP inhibits the activation of transcription factor SRF. Interacts with GRIN1. Interacts with DYNLL1. Detected in heart myocardium and lung.

Its subcellular location is the cytoplasm. The protein resides in the cytoskeleton. It is found in the cell membrane. It localises to the myofibril. The protein localises to the sarcomere. Its subcellular location is the i band. The protein resides in the z line. It is found in the cell junction. Functionally, plays a role in cellular signaling via Rho-related GTP-binding proteins and activation of transcription factor SRF. Targets TJP1 to cell junctions. In cortical neurons, may play a role in glutaminergic signal transduction through interaction with the NMDA receptor subunit GRIN1. This chain is Myocardial zonula adherens protein (Myzap), found in Mus musculus (Mouse).